The chain runs to 92 residues: Sec-independent protein translocase protein TatA (92 aa).

The helical transmembrane segment at 1–21 (MGIFDWKHWIVILVVVVLVFG) threads the bilayer. Positions 44–92 (NDDEKPADPVVNPVPPAQPVHPQATQPITERRTFDVQAEKVEEPTRKDS) are disordered. The span at 72 to 92 (TERRTFDVQAEKVEEPTRKDS) shows a compositional bias: basic and acidic residues.

It belongs to the TatA/E family. In terms of assembly, the Tat system comprises two distinct complexes: a TatABC complex, containing multiple copies of TatA, TatB and TatC subunits, and a separate TatA complex, containing only TatA subunits. Substrates initially bind to the TatABC complex, which probably triggers association of the separate TatA complex to form the active translocon.

Its subcellular location is the cell inner membrane. In terms of biological role, part of the twin-arginine translocation (Tat) system that transports large folded proteins containing a characteristic twin-arginine motif in their signal peptide across membranes. TatA could form the protein-conducting channel of the Tat system. The chain is Sec-independent protein translocase protein TatA from Pseudomonas fluorescens (strain SBW25).